A 1189-amino-acid polypeptide reads, in one-letter code: Pumilio homolog 1 (1189 aa).

5 disordered regions span residues 24–65 (QHAQ…SSPV), 233–288 (SCLR…QNGI), 491–525 (QQTT…GQQT), 614–652 (AGTT…NNSL), and 743–774 (GPVG…SSLN). Positions 45-58 (QAQPQPAANQALAA) are enriched in low complexity. The segment covering 250-277 (NDKGDKKNKGTFDGDKLGDLKEEGDVMD) has biased composition (basic and acidic residues). The span at 491–503 (QQTTQQTQQGQQQ) shows a compositional bias: low complexity. Over residues 512 to 525 (RPLTPNQNQQGQQT) the composition is skewed to polar residues. Composition is skewed to low complexity over residues 627-652 (QQPQ…NNSL) and 764-774 (LSSHGSSSSLN). One can recognise a PUM-HD domain in the interval 829–1171 (GRSRLLEDFR…HILAKLEKYY (343 aa)). Pumilio repeat units lie at residues 849–884 (EIAG…LVFN), 885–920 (EILQ…ALAE), 921–958 (RIRG…EMVR), 959–994 (ELDG…FIID), 995–1030 (AFKG…PILE), 1031–1066 (ELHQ…KIVA), 1067–1102 (EIRG…MLID), and 1106–1145 (TMND…IVMH). Positions 864-868 (SRFIQ) are adenine-nucleotide binding in RNA target. The tract at residues 900–904 (NYVIQ) is uracil-nucleotide binding in RNA target. The segment at 936–940 (CRVIQ) is adenine-nucleotide binding in RNA target. The segment at 974 to 978 (NHVVQ) is non-specific-nucleotide binding in RNA target. The tract at residues 1010 to 1014 (CRVIQ) is adenine-nucleotide binding in RNA target. Residues 1046–1050 (NYVIQ) are uracil-nucleotide binding in RNA target. Guanine-nucleotide binding in RNA target regions lie at residues 1082–1086 (SNVVE) and 1083–1086 (NVVE). The tract at residues 1125–1129 (NYVVQ) is uracil-nucleotide binding in RNA target.

Detected in embryonic male and female gonads, heart, liver and muscle. Detected in adult brain, testis, ovary, heart, lung, spleen, kidney and muscle.

The protein resides in the cytoplasm. Its subcellular location is the P-body. It is found in the cytoplasmic granule. In terms of biological role, sequence-specific RNA-binding protein that acts as a post-transcriptional repressor by binding the 3'-UTR of mRNA targets. Binds to an RNA consensus sequence, the Pumilio Response Element (PRE), 5'-UGUANAUA-3', that is related to the Nanos Response Element (NRE). Mediates post-transcriptional repression of transcripts via different mechanisms: acts via direct recruitment of the CCR4-POP2-NOT deadenylase leading to translational inhibition and mRNA degradation. Also mediates deadenylation-independent repression by promoting accessibility of miRNAs. In Gallus gallus (Chicken), this protein is Pumilio homolog 1 (PUM1).